An 877-amino-acid polypeptide reads, in one-letter code: Alanine--tRNA ligase (877 aa).

Positions 556, 560, 657, and 661 each coordinate Zn(2+).

It belongs to the class-II aminoacyl-tRNA synthetase family. Zn(2+) serves as cofactor.

The protein localises to the cytoplasm. The enzyme catalyses tRNA(Ala) + L-alanine + ATP = L-alanyl-tRNA(Ala) + AMP + diphosphate. Functionally, catalyzes the attachment of alanine to tRNA(Ala) in a two-step reaction: alanine is first activated by ATP to form Ala-AMP and then transferred to the acceptor end of tRNA(Ala). Also edits incorrectly charged Ser-tRNA(Ala) and Gly-tRNA(Ala) via its editing domain. The chain is Alanine--tRNA ligase from Wolbachia pipientis wMel.